A 216-amino-acid chain; its full sequence is Pyridoxine/pyridoxamine 5'-phosphate oxidase (216 aa).

Substrate is bound by residues 9-12 (RLSY) and Arg-67. FMN is bound by residues 62-67 (RIVLLR), 77-78 (YT), Lys-84, and Gln-106. Tyr-124, Arg-128, and Ser-132 together coordinate substrate. Residues 142-143 (QS) and Trp-188 contribute to the FMN site. Position 194 to 196 (194 to 196 (RMH)) interacts with substrate. FMN is bound at residue Arg-198.

This sequence belongs to the pyridoxamine 5'-phosphate oxidase family. As to quaternary structure, homodimer. Requires FMN as cofactor.

The enzyme catalyses pyridoxamine 5'-phosphate + O2 + H2O = pyridoxal 5'-phosphate + H2O2 + NH4(+). It carries out the reaction pyridoxine 5'-phosphate + O2 = pyridoxal 5'-phosphate + H2O2. The protein operates within cofactor metabolism; pyridoxal 5'-phosphate salvage; pyridoxal 5'-phosphate from pyridoxamine 5'-phosphate: step 1/1. It functions in the pathway cofactor metabolism; pyridoxal 5'-phosphate salvage; pyridoxal 5'-phosphate from pyridoxine 5'-phosphate: step 1/1. Catalyzes the oxidation of either pyridoxine 5'-phosphate (PNP) or pyridoxamine 5'-phosphate (PMP) into pyridoxal 5'-phosphate (PLP). This chain is Pyridoxine/pyridoxamine 5'-phosphate oxidase, found in Psychrobacter arcticus (strain DSM 17307 / VKM B-2377 / 273-4).